The primary structure comprises 517 residues: MFS-type transporter avaJ (517 aa).

Residues 1–12 (MTSPEHSEDERQ) show a composition bias toward basic and acidic residues. Residues 1 to 28 (MTSPEHSEDERQPLLTKPSGPDESQSGF) form a disordered region. The helical transmembrane segment at 40-60 (AMWLLPMYTLYAITAGSLIIP) threads the bilayer. A glycan (N-linked (GlcNAc...) asparagine) is linked at N63. A run of 5 helical transmembrane segments spans residues 103–123 (IYGT…LMGF), 131–151 (PILL…LAAL), 161–181 (WLLV…ATTA), 204–224 (AAFT…LSVF), and 230–250 (AYWL…LALP). The N-linked (GlcNAc...) asparagine glycan is linked to N265. 5 helical membrane-spanning segments follow: residues 299-319 (MYIV…LVPL), 338-358 (FLTG…PLFM), 391-411 (LLLQ…LGVI), 442-462 (VLLG…PSGM), and 476-496 (ALFA…MFIG). N497 and N512 each carry an N-linked (GlcNAc...) asparagine glycan.

Belongs to the major facilitator superfamily. TCR/Tet family.

It is found in the membrane. The protein operates within secondary metabolite biosynthesis. Functionally, MFS-type transporter; part of the cluster that mediates the biosynthesis of a highly modified cyclo-arginine-tryptophan dipeptide (cRW). The protein is MFS-type transporter avaJ of Aspergillus versicolor.